Here is a 505-residue protein sequence, read N- to C-terminus: Maturase K (505 aa).

This sequence belongs to the intron maturase 2 family. MatK subfamily.

The protein localises to the plastid. It localises to the chloroplast. Usually encoded in the trnK tRNA gene intron. Probably assists in splicing its own and other chloroplast group II introns. This Morus alba (White mulberry) protein is Maturase K.